The sequence spans 135 residues: Large ribosomal subunit protein bL17 (135 aa).

Belongs to the bacterial ribosomal protein bL17 family. As to quaternary structure, part of the 50S ribosomal subunit. Contacts protein L32.

This chain is Large ribosomal subunit protein bL17, found in Listeria innocua serovar 6a (strain ATCC BAA-680 / CLIP 11262).